Here is a 353-residue protein sequence, read N- to C-terminus: Photosystem II D2 protein (353 aa).

An N-acetylthreonine modification is found at Thr-2. Position 2 is a phosphothreonine (Thr-2). The helical transmembrane segment at 41-61 (CAYFALGGWFTGTTFVTSWYT) threads the bilayer. Position 118 (His-118) interacts with chlorophyll a. Residues 125–141 (GFMLRQFELARSVQLRP) traverse the membrane as a helical segment. Gln-130 and Asn-143 together coordinate pheophytin a. A helical membrane pass occupies residues 153–166 (VFVSVFLIYPLGQS). His-198 lines the chlorophyll a pocket. Residues 208–228 (AALLCAIHGATVENTLFEDGD) form a helical membrane-spanning segment. A plastoquinone is bound by residues His-215 and Phe-262. Position 215 (His-215) interacts with Fe cation. His-269 provides a ligand contact to Fe cation. A helical membrane pass occupies residues 279–295 (GLWMSALGVVGLALNLR).

The protein belongs to the reaction center PufL/M/PsbA/D family. As to quaternary structure, PSII is composed of 1 copy each of membrane proteins PsbA, PsbB, PsbC, PsbD, PsbE, PsbF, PsbH, PsbI, PsbJ, PsbK, PsbL, PsbM, PsbT, PsbX, PsbY, PsbZ, Psb30/Ycf12, at least 3 peripheral proteins of the oxygen-evolving complex and a large number of cofactors. It forms dimeric complexes. The D1/D2 heterodimer binds P680, chlorophylls that are the primary electron donor of PSII, and subsequent electron acceptors. It shares a non-heme iron and each subunit binds pheophytin, quinone, additional chlorophylls, carotenoids and lipids. There is also a Cl(-1) ion associated with D1 and D2, which is required for oxygen evolution. The PSII complex binds additional chlorophylls, carotenoids and specific lipids. is required as a cofactor.

The protein resides in the plastid. It localises to the chloroplast thylakoid membrane. The catalysed reaction is 2 a plastoquinone + 4 hnu + 2 H2O = 2 a plastoquinol + O2. Photosystem II (PSII) is a light-driven water:plastoquinone oxidoreductase that uses light energy to abstract electrons from H(2)O, generating O(2) and a proton gradient subsequently used for ATP formation. It consists of a core antenna complex that captures photons, and an electron transfer chain that converts photonic excitation into a charge separation. The D1/D2 (PsbA/PsbD) reaction center heterodimer binds P680, the primary electron donor of PSII as well as several subsequent electron acceptors. D2 is needed for assembly of a stable PSII complex. The polypeptide is Photosystem II D2 protein (Coffea arabica (Arabian coffee)).